We begin with the raw amino-acid sequence, 959 residues long: Isoleucine--tRNA ligase (959 aa).

Positions 60–70 (PYANGSLHMGH) match the 'HIGH' region motif. Glutamate 569 serves as a coordination point for L-isoleucyl-5'-AMP. The 'KMSKS' region signature appears at 610–614 (KMSKS). Lysine 613 serves as a coordination point for ATP. Cysteine 928, cysteine 931, cysteine 948, and cysteine 951 together coordinate Zn(2+).

Belongs to the class-I aminoacyl-tRNA synthetase family. IleS type 1 subfamily. As to quaternary structure, monomer. It depends on Zn(2+) as a cofactor.

The protein resides in the cytoplasm. The catalysed reaction is tRNA(Ile) + L-isoleucine + ATP = L-isoleucyl-tRNA(Ile) + AMP + diphosphate. In terms of biological role, catalyzes the attachment of isoleucine to tRNA(Ile). As IleRS can inadvertently accommodate and process structurally similar amino acids such as valine, to avoid such errors it has two additional distinct tRNA(Ile)-dependent editing activities. One activity is designated as 'pretransfer' editing and involves the hydrolysis of activated Val-AMP. The other activity is designated 'posttransfer' editing and involves deacylation of mischarged Val-tRNA(Ile). This Rippkaea orientalis (strain PCC 8801 / RF-1) (Cyanothece sp. (strain PCC 8801)) protein is Isoleucine--tRNA ligase.